Consider the following 549-residue polypeptide: Hydroxylamine reductase (549 aa).

Residues cysteine 5, cysteine 8, cysteine 17, and cysteine 23 each coordinate [4Fe-4S] cluster. Hybrid [4Fe-2O-2S] cluster-binding residues include histidine 244, glutamate 268, cysteine 312, cysteine 403, cysteine 431, cysteine 456, glutamate 491, and lysine 493. At cysteine 403 the chain carries Cysteine persulfide.

Belongs to the HCP family. It depends on [4Fe-4S] cluster as a cofactor. The cofactor is hybrid [4Fe-2O-2S] cluster.

The protein resides in the cytoplasm. The catalysed reaction is A + NH4(+) + H2O = hydroxylamine + AH2 + H(+). Functionally, catalyzes the reduction of hydroxylamine to form NH(3) and H(2)O. This is Hydroxylamine reductase from Caldanaerobacter subterraneus subsp. tengcongensis (strain DSM 15242 / JCM 11007 / NBRC 100824 / MB4) (Thermoanaerobacter tengcongensis).